Here is a 183-residue protein sequence, read N- to C-terminus: Threonylcarbamoyl-AMP synthase (183 aa).

One can recognise a YrdC-like domain in the interval 1–183 (MELAQIVERL…IFSRQIFRRG (183 aa)).

It belongs to the SUA5 family. TsaC subfamily.

Its subcellular location is the cytoplasm. It carries out the reaction L-threonine + hydrogencarbonate + ATP = L-threonylcarbamoyladenylate + diphosphate + H2O. Required for the formation of a threonylcarbamoyl group on adenosine at position 37 (t(6)A37) in tRNAs that read codons beginning with adenine. Catalyzes the conversion of L-threonine, HCO(3)(-)/CO(2) and ATP to give threonylcarbamoyl-AMP (TC-AMP) as the acyladenylate intermediate, with the release of diphosphate. This Mannheimia succiniciproducens (strain KCTC 0769BP / MBEL55E) protein is Threonylcarbamoyl-AMP synthase.